The following is a 141-amino-acid chain: VLSPADKTNVKSTWDKIGGHAGEYGGEALERTFVSFPTTKTYFPHFDLSPGSAQVKAHGKKVADALTLAVGHLDDLAGALSALSDLHAHKLRVDPVNFKLLSHCLLVTLACHHPAEFTPAVHASLDKFFSTVSTVLTSKYR.

The Globin domain occupies 1-141; sequence VLSPADKTNV…VSTVLTSKYR (141 aa). Ser-3 carries the post-translational modification Phosphoserine. Lys-7 is subject to N6-succinyllysine. Thr-8 is modified (phosphothreonine). Lys-11 is subject to N6-succinyllysine. N6-acetyllysine; alternate is present on Lys-16. The residue at position 16 (Lys-16) is an N6-succinyllysine; alternate. Phosphotyrosine is present on Tyr-24. Ser-35 is modified (phosphoserine). Lys-40 carries the post-translational modification N6-succinyllysine. At Ser-49 the chain carries Phosphoserine. His-58 is a binding site for O2. Position 87 (His-87) interacts with heme b. At Ser-102 the chain carries Phosphoserine. Thr-108 carries the post-translational modification Phosphothreonine. Ser-124 bears the Phosphoserine mark. Residues Thr-134 and Thr-137 each carry the phosphothreonine modification. A Phosphoserine modification is found at Ser-138.

It belongs to the globin family. As to quaternary structure, heterotetramer of two alpha chains and two beta chains. Red blood cells.

Functionally, involved in oxygen transport from the lung to the various peripheral tissues. Its function is as follows. Hemopressin acts as an antagonist peptide of the cannabinoid receptor CNR1. Hemopressin-binding efficiently blocks cannabinoid receptor CNR1 and subsequent signaling. This chain is Hemoglobin subunit alpha (HBA), found in Martes foina (Beech marten).